The chain runs to 515 residues: GMP synthase [glutamine-hydrolyzing] (515 aa).

One can recognise a Glutamine amidotransferase type-1 domain in the interval 6–198 (KVIIIDYGSQ…LFHVAKLKAD (193 aa)). C83 (nucleophile) is an active-site residue. Active-site residues include H172 and E174. The GMPS ATP-PPase domain maps to 199-390 (WTMSSFVERA…LGLPDFIIWR (192 aa)). 226 to 232 (SGGIDST) provides a ligand contact to ATP.

In terms of assembly, homodimer.

The enzyme catalyses XMP + L-glutamine + ATP + H2O = GMP + L-glutamate + AMP + diphosphate + 2 H(+). It functions in the pathway purine metabolism; GMP biosynthesis; GMP from XMP (L-Gln route): step 1/1. Its function is as follows. Catalyzes the synthesis of GMP from XMP. This Nitratidesulfovibrio vulgaris (strain DP4) (Desulfovibrio vulgaris) protein is GMP synthase [glutamine-hydrolyzing].